Consider the following 246-residue polypeptide: Virulence plasmid protein pGP6-D (246 aa).

The protein belongs to the UPF0137 (pGP6-D) family.

The sequence is that of Virulence plasmid protein pGP6-D from Chlamydia muridarum (strain MoPn / Nigg).